Reading from the N-terminus, the 159-residue chain is Putative 4-hydroxy-4-methyl-2-oxoglutarate aldolase (159 aa).

Substrate is bound by residues 78–81 (GDVI) and arginine 100. Aspartate 101 lines the a divalent metal cation pocket.

Belongs to the class II aldolase/RraA-like family. In terms of assembly, homotrimer. Requires a divalent metal cation as cofactor.

It catalyses the reaction 4-hydroxy-4-methyl-2-oxoglutarate = 2 pyruvate. The catalysed reaction is oxaloacetate + H(+) = pyruvate + CO2. Its function is as follows. Catalyzes the aldol cleavage of 4-hydroxy-4-methyl-2-oxoglutarate (HMG) into 2 molecules of pyruvate. Also contains a secondary oxaloacetate (OAA) decarboxylase activity due to the common pyruvate enolate transition state formed following C-C bond cleavage in the retro-aldol and decarboxylation reactions. The chain is Putative 4-hydroxy-4-methyl-2-oxoglutarate aldolase from Mycobacterium sp. (strain JLS).